The sequence spans 245 residues: tRNA1(Val) (adenine(37)-N6)-methyltransferase (245 aa).

This sequence belongs to the methyltransferase superfamily. tRNA (adenine-N(6)-)-methyltransferase family.

The protein localises to the cytoplasm. The catalysed reaction is adenosine(37) in tRNA1(Val) + S-adenosyl-L-methionine = N(6)-methyladenosine(37) in tRNA1(Val) + S-adenosyl-L-homocysteine + H(+). Functionally, specifically methylates the adenine in position 37 of tRNA(1)(Val) (anticodon cmo5UAC). The sequence is that of tRNA1(Val) (adenine(37)-N6)-methyltransferase from Cronobacter sakazakii (strain ATCC BAA-894) (Enterobacter sakazakii).